A 495-amino-acid chain; its full sequence is Angiopoietin-2 (495 aa).

The N-terminal stretch at 1–18 (MWQIVFFTLSCDLVRAAA) is a signal peptide. N-linked (GlcNAc...) asparagine glycosylation is found at asparagine 88, asparagine 118, asparagine 132, asparagine 150, asparagine 239, and asparagine 303. Residues 165–247 (STNKLEKQIL…VNNSVLQKQQ (83 aa)) adopt a coiled-coil conformation. Residues 274–494 (KEEQIIYRDC…GTTMMIRPAD (221 aa)) enclose the Fibrinogen C-terminal domain. Residues cysteine 283 and cysteine 312 are joined by a disulfide bond. Ca(2+) is bound by residues aspartate 428, aspartate 430, cysteine 432, and cysteine 434. Disulfide bonds link cysteine 432/cysteine 434 and cysteine 436/cysteine 449.

Interacts with TEK/TIE2, competing for the same binding site as ANGPT1. Interacts with ITGA5. Interacts with SVEP1/polydom. Interacts with THBD; this interaction significantly inhibits the generation of activated PC and TAFIa/CPB2 by the thrombin/thrombomodulin complex.

The protein resides in the secreted. Binds to TEK/TIE2, competing for the ANGPT1 binding site, and modulating ANGPT1 signaling. Can induce tyrosine phosphorylation of TEK/TIE2 in the absence of ANGPT1. In the absence of angiogenic inducers, such as VEGF, ANGPT2-mediated loosening of cell-matrix contacts may induce endothelial cell apoptosis with consequent vascular regression. In concert with VEGF, it may facilitate endothelial cell migration and proliferation, thus serving as a permissive angiogenic signal. Involved in the regulation of lymphangiogenesis. The sequence is that of Angiopoietin-2 (ANGPT2) from Canis lupus familiaris (Dog).